A 371-amino-acid polypeptide reads, in one-letter code: 2-aminoethylphosphonate--pyruvate transaminase (371 aa).

Lys195 is modified (N6-(pyridoxal phosphate)lysine).

The protein belongs to the class-V pyridoxal-phosphate-dependent aminotransferase family. PhnW subfamily. In terms of assembly, homotetramer; however this is for an enzyme with a molecular weight of 16500, which is in disagreement with the weight of this protein. The cofactor is pyridoxal 5'-phosphate.

The enzyme catalyses (2-aminoethyl)phosphonate + pyruvate = phosphonoacetaldehyde + L-alanine. Inhibited by phosphonic acids and very slightly inhibited by aminophosphonic acids. Involved in phosphonate degradation. This Pseudomonas aeruginosa (strain ATCC 15692 / DSM 22644 / CIP 104116 / JCM 14847 / LMG 12228 / 1C / PRS 101 / PAO1) protein is 2-aminoethylphosphonate--pyruvate transaminase (phnW).